A 593-amino-acid chain; its full sequence is Translocon at the outer membrane of chloroplasts 64 (593 aa).

At 1-4 the chain is on the chloroplast intermembrane side; the sequence is MKSM. A helical transmembrane segment spans residues 5–25; that stretch reads ASPSSQIWVILGLGLAGIYVL. Residues 26–144 lie on the Cytoplasmic side of the membrane; sequence TRKLTQAVKE…NPAVPNRVPG (119 aa). A helical membrane pass occupies residues 145–165; the sequence is GSSSGAAVAVAANFVDFSLGV. The Chloroplast intermembrane segment spans residues 166–403; the sequence is DTSGGVRVPA…LSHDYQSRAL (238 aa). Residues 404–424 form a helical membrane-spanning segment; that stretch reads SLLSIASISGCCQVTVPLGFF. The Cytoplasmic portion of the chain corresponds to 425 to 593; the sequence is DKNPVSVSLI…SAERLRKLFQ (169 aa). 3 TPR repeats span residues 477–510, 511–544, and 545–578; these read AEIS…CGNN, ATYY…DKKN, and VKAY…EPTN.

Part of the Toc complex and of the intermembrane space complex. Interacts with TOC12, TIC22 and with the cytosolic domain of TOC34 in a GTP dependent manner. Interacts (via TPR region) with HSP90 and with HSP70 with low efficiency.

Its subcellular location is the plastid. The protein localises to the chloroplast outer membrane. In terms of biological role, chaperone receptor mediating Hsp90-dependent protein targeting to chloroplasts. Bi-functional preprotein receptor acting on both sides of the membrane. The protein is Translocon at the outer membrane of chloroplasts 64 (TOC64) of Pisum sativum (Garden pea).